The sequence spans 397 residues: 1-carboxy-3-chloro-3,4-dihydroxycyclo hexa-1,5-diene dehydrogenase (397 aa).

This sequence to P.putida PHT4.

In Comamonas testosteroni (Pseudomonas testosteroni), this protein is 1-carboxy-3-chloro-3,4-dihydroxycyclo hexa-1,5-diene dehydrogenase (cbaC).